The following is a 614-amino-acid chain: DBH-like monooxygenase protein 1 homolog (614 aa).

A signal peptide spans 1 to 22 (MSENKLFCAIVFLTSLFCSTCS). Residues 23–593 (QGTRFVHSAA…CRKDSAIQCE (571 aa)) are Lumenal-facing. The DOMON domain occupies 37 to 150 (RRYNIKWGFD…STVRVIWAFH (114 aa)). Residue Asn-116 is glycosylated (N-linked (GlcNAc...) asparagine). Residue Tyr-205 is part of the active site. 2 cysteine pairs are disulfide-bonded: Cys-207–Cys-259 and Cys-244–Cys-271. Cu cation contacts are provided by His-237 and His-238. A glycan (N-linked (GlcNAc...) asparagine) is linked at Asn-249. Cu cation is bound by residues His-309, His-391, and His-393. Disulfide bonds link Cys-366–Cys-482, Cys-370–Cys-552, and Cys-445–Cys-467. His-391 is an active-site residue. N-linked (GlcNAc...) asparagine glycosylation occurs at Asn-454. Met-466 is a binding site for Cu cation. N-linked (GlcNAc...) asparagine glycosylation occurs at Asn-519. A helical transmembrane segment spans residues 594-612 (HSLALLLTACLLLILQTCL).

The protein belongs to the copper type II ascorbate-dependent monooxygenase family. Cu(2+) is required as a cofactor.

It is found in the endoplasmic reticulum membrane. The chain is DBH-like monooxygenase protein 1 homolog (moxd1) from Danio rerio (Zebrafish).